The chain runs to 266 residues: Putative deoxyribonuclease tatdn3 (266 aa).

The Zn(2+) site is built by histidine 9, histidine 11, glutamate 103, histidine 143, histidine 166, and aspartate 214.

The protein belongs to the metallo-dependent hydrolases superfamily. TatD-type hydrolase family. Mn(2+) serves as cofactor. Ca(2+) is required as a cofactor. It depends on Mg(2+) as a cofactor. Requires Zn(2+) as cofactor.

The protein localises to the nucleus. The 3'-exonuclease activity is sensitive to the metal ion present in the active site, whereas the AP endodeoxyribonuclease activity is observed in a variety of divalent metal cofactors. 3'-exoxonuclease activity is suppressed in the presence of Ca(2+), Zn(2+) and Ni(2+). Exhibits 3'-exonuclease activities and apurinic/apyrimidinic (AP) endonuclease (in vitro). Show preferential AP endonuclease activity on double-stranded DNA substrates and 3'- exonuclease activity on single-stranded DNA. The protein is Putative deoxyribonuclease tatdn3 (tatdn3) of Danio rerio (Zebrafish).